A 234-amino-acid chain; its full sequence is Octanoyltransferase (234 aa).

Residues isoleucine 43–leucine 231 enclose the BPL/LPL catalytic domain. Residues arginine 88–histidine 95, alanine 160–glycine 162, and glycine 173–alanine 175 each bind substrate. The active-site Acyl-thioester intermediate is the cysteine 191.

The protein belongs to the LipB family.

The protein localises to the cytoplasm. It catalyses the reaction octanoyl-[ACP] + L-lysyl-[protein] = N(6)-octanoyl-L-lysyl-[protein] + holo-[ACP] + H(+). It functions in the pathway protein modification; protein lipoylation via endogenous pathway; protein N(6)-(lipoyl)lysine from octanoyl-[acyl-carrier-protein]: step 1/2. Functionally, catalyzes the transfer of endogenously produced octanoic acid from octanoyl-acyl-carrier-protein onto the lipoyl domains of lipoate-dependent enzymes. Lipoyl-ACP can also act as a substrate although octanoyl-ACP is likely to be the physiological substrate. The sequence is that of Octanoyltransferase from Christiangramia forsetii (strain DSM 17595 / CGMCC 1.15422 / KT0803) (Gramella forsetii).